A 419-amino-acid polypeptide reads, in one-letter code: Elongation factor Tu, chloroplastic (419 aa).

The tr-type G domain maps to 10–214 (KPHVNIGTIG…AVDSYIPTPK (205 aa)). The segment at 19–26 (GHVDHGKT) is G1. Residue 19-26 (GHVDHGKT) coordinates GTP. Threonine 26 serves as a coordination point for Mg(2+). Positions 60 to 64 (GITIN) are G2. Positions 81–84 (DCPG) are G3. GTP is bound by residues 81–85 (DCPGH) and 136–139 (NKED). The interval 136–139 (NKED) is G4. The G5 stretch occupies residues 174 to 176 (SAL).

This sequence belongs to the TRAFAC class translation factor GTPase superfamily. Classic translation factor GTPase family. EF-Tu/EF-1A subfamily.

It is found in the plastid. The protein localises to the chloroplast. It carries out the reaction GTP + H2O = GDP + phosphate + H(+). GTP hydrolase that promotes the GTP-dependent binding of aminoacyl-tRNA to the A-site of ribosomes during protein biosynthesis. This chain is Elongation factor Tu, chloroplastic (tufA), found in Chara vulgaris (Common stonewort).